A 140-amino-acid chain; its full sequence is MERTLTILKPDCVKKQLIGAVINQIERAGFRVVAMKKTRLTKETAGEFYAVHRERPFYGELVDFMSSGPCVPMILEKANAVADFRTLIGATDPAEAAEGTVRKLYADSKGENIVHGSDSAENAAVEAGFFFAAEEVVRSN.

Residues K9, F57, R85, T91, R102, and N112 each coordinate ATP. The active-site Pros-phosphohistidine intermediate is H115.

The protein belongs to the NDK family. As to quaternary structure, homotetramer. Mg(2+) serves as cofactor.

The protein resides in the cytoplasm. The enzyme catalyses a 2'-deoxyribonucleoside 5'-diphosphate + ATP = a 2'-deoxyribonucleoside 5'-triphosphate + ADP. It carries out the reaction a ribonucleoside 5'-diphosphate + ATP = a ribonucleoside 5'-triphosphate + ADP. Its function is as follows. Major role in the synthesis of nucleoside triphosphates other than ATP. The ATP gamma phosphate is transferred to the NDP beta phosphate via a ping-pong mechanism, using a phosphorylated active-site intermediate. The protein is Nucleoside diphosphate kinase of Chlorobium luteolum (strain DSM 273 / BCRC 81028 / 2530) (Pelodictyon luteolum).